The following is a 122-amino-acid chain: MIQQESRLKVADNTGAKEILCIRVLGGSGRRYAGIGDVIVATVKDAIPGGNVKRGDVVKAVVVRTAKERRRPDGSYIRFDENAAVLLKSDGEPRGTRIFGPVGRELRDKKFMRIVSLAPEVI.

It belongs to the universal ribosomal protein uL14 family. In terms of assembly, part of the 50S ribosomal subunit. Forms a cluster with proteins L3 and L19. In the 70S ribosome, L14 and L19 interact and together make contacts with the 16S rRNA in bridges B5 and B8.

Its function is as follows. Binds to 23S rRNA. Forms part of two intersubunit bridges in the 70S ribosome. In Beutenbergia cavernae (strain ATCC BAA-8 / DSM 12333 / CCUG 43141 / JCM 11478 / NBRC 16432 / NCIMB 13614 / HKI 0122), this protein is Large ribosomal subunit protein uL14.